The primary structure comprises 490 residues: Sporulation-specific protein 1 (490 aa).

The region spanning 18-272 is the Protein kinase domain; it reads YSIQSCIGRG…AYNLLSFEFV (255 aa). Residues 24 to 32 and K47 contribute to the ATP site; that span reads IGRGNFGDV. Catalysis depends on D141, which acts as the Proton acceptor.

Belongs to the protein kinase superfamily. STE Ser/Thr protein kinase family. STE20 subfamily.

The protein resides in the nucleus. The protein localises to the cytoplasm. The enzyme catalyses L-seryl-[protein] + ATP = O-phospho-L-seryl-[protein] + ADP + H(+). It catalyses the reaction L-threonyl-[protein] + ATP = O-phospho-L-threonyl-[protein] + ADP + H(+). Its function is as follows. Serine/threonine protein kinase required for spore wall development. The polypeptide is Sporulation-specific protein 1 (SPS1) (Saccharomyces cerevisiae (strain ATCC 204508 / S288c) (Baker's yeast)).